Consider the following 44-residue polypeptide: uncharacterized protein (44 aa).

This is an uncharacterized protein from Saccharomyces cerevisiae (strain ATCC 204508 / S288c) (Baker's yeast).